We begin with the raw amino-acid sequence, 153 residues long: Ribosome maturation factor RimP (153 aa).

Belongs to the RimP family.

The protein localises to the cytoplasm. Its function is as follows. Required for maturation of 30S ribosomal subunits. The protein is Ribosome maturation factor RimP of Glaesserella parasuis serovar 5 (strain SH0165) (Haemophilus parasuis).